The chain runs to 362 residues: Class I histocompatibility antigen, Gogo-B*0103 alpha chain (362 aa).

The signal sequence occupies residues 1 to 24; that stretch reads MRVTAPRTLLLLLSAALALTETWA. The tract at residues 25–114 is alpha-1; it reads GSHSMRYFDT…ALRYYNQSEA (90 aa). The Extracellular segment spans residues 25-308; that stretch reads GSHSMRYFDT…EPSSQSTIPI (284 aa). N-linked (GlcNAc...) asparagine glycosylation occurs at asparagine 110. Residues 115 to 206 are alpha-2; the sequence is GSHTIQWMYG…ENGRETLQRA (92 aa). Intrachain disulfides connect cysteine 125-cysteine 188 and cysteine 227-cysteine 283. Residues 207-298 form an alpha-3 region; sequence DTPKTHVTHH…GLPKPLTLRW (92 aa). The Ig-like C1-type domain occupies 209 to 295; sequence PKTHVTHHPI…QHEGLPKPLT (87 aa). Residues 299 to 308 are connecting peptide; the sequence is EPSSQSTIPI. Residues 309–332 form a helical membrane-spanning segment; sequence VGIVAGLAVLAVVVIGAVVTAVIC. The Cytoplasmic segment spans residues 333-362; it reads RRKSSGGKGGSYSQAASSDSAQGSDVSLTA. The disordered stretch occupies residues 335–362; sequence KSSGGKGGSYSQAASSDSAQGSDVSLTA. Over residues 343–362 the composition is skewed to low complexity; that stretch reads SYSQAASSDSAQGSDVSLTA.

This sequence belongs to the MHC class I family. In terms of assembly, heterodimer of an alpha chain and a beta chain (beta-2-microglobulin).

It localises to the membrane. Its function is as follows. Involved in the presentation of foreign antigens to the immune system. The chain is Class I histocompatibility antigen, Gogo-B*0103 alpha chain from Gorilla gorilla gorilla (Western lowland gorilla).